Reading from the N-terminus, the 547-residue chain is Eukaryotic translation initiation factor 3 subunit D (547 aa).

Disordered stretches follow at residues 1–22 (MANF…PSTS) and 114–159 (SVRG…TRDS). Over residues 126 to 148 (GRGGQRGGFSTRGGRGGARGGYG) the composition is skewed to gly residues. An RNA gate region spans residues 284 to 298 (PLDYITVNENAADPP).

It belongs to the eIF-3 subunit D family. As to quaternary structure, component of the eukaryotic translation initiation factor 3 (eIF-3) complex.

It is found in the cytoplasm. MRNA cap-binding component of the eukaryotic translation initiation factor 3 (eIF-3) complex, which is involved in protein synthesis of a specialized repertoire of mRNAs and, together with other initiation factors, stimulates binding of mRNA and methionyl-tRNAi to the 40S ribosome. The eIF-3 complex specifically targets and initiates translation of a subset of mRNAs involved in cell proliferation. In the eIF-3 complex, eif3d specifically recognizes and binds the 7-methylguanosine cap of a subset of mRNAs. In Cryptococcus neoformans var. neoformans serotype D (strain B-3501A) (Filobasidiella neoformans), this protein is Eukaryotic translation initiation factor 3 subunit D.